A 179-amino-acid polypeptide reads, in one-letter code: Apolipophorin-3b (179 aa).

Positions M1 to A16 are cleaved as a signal peptide. Repeats lie at residues V30 to A40, A41 to T52, P53 to L60, T61 to L78, K79 to V89, A90 to N99, L100 to P113, A114 to V127, G128 to V140, A141 to A151, L152 to N165, and L166 to N179. The N-linked (GlcNAc...) asparagine glycan is linked to N34. The N-linked (GlcNAc...) asparagine glycan is linked to N101. Residues L152–N179 are disordered. A compositionally biased stretch (polar residues) spans N165–N179.

This sequence belongs to the insect apolipophorin-3 family. Equilibrium between a soluble monomer and a bound lipoprotein form. Apolipophorin-3 associates with lipophorin during lipid loading until each particle contains 14 molecules of apolipophorin-3 in L.migratoria (5 molecules of apolipophorin-3a and 9 of apolipophorin-3b). In terms of tissue distribution, hemolymph.

The protein localises to the secreted. Assists in the loading of diacylglycerol, generated from triacylglycerol stores in the fat body through the action of adipokinetic hormone, into lipophorin, the hemolymph lipoprotein. It increases the lipid carrying capacity of lipophorin by covering the expanding hydrophobic surface resulting from diacylglycerol uptake. It thus plays a critical role in the transport of lipids during flight in several species of insects. The polypeptide is Apolipophorin-3b (Locusta migratoria (Migratory locust)).